Consider the following 97-residue polypeptide: Exodeoxyribonuclease 7 small subunit (97 aa).

The tract at residues 1–22 is disordered; that stretch reads MAKTASPGATPPGNGTEPLPDN.

This sequence belongs to the XseB family. Heterooligomer composed of large and small subunits.

It is found in the cytoplasm. It carries out the reaction Exonucleolytic cleavage in either 5'- to 3'- or 3'- to 5'-direction to yield nucleoside 5'-phosphates.. In terms of biological role, bidirectionally degrades single-stranded DNA into large acid-insoluble oligonucleotides, which are then degraded further into small acid-soluble oligonucleotides. This is Exodeoxyribonuclease 7 small subunit from Burkholderia cenocepacia (strain HI2424).